Reading from the N-terminus, the 289-residue chain is Deleted in azoospermia-like (289 aa).

The tract at residues 1–20 (MSANAEAQCGSISEDNTHSS) is disordered. Residues 36–117 (NTVFVGGIDI…PAIRKQQNLC (82 aa)) form the RRM domain. Positions 162–187 (TYAYSSPAVLIQQQVPVGYQPAYNYQ) constitute a DAZ domain.

The protein belongs to the RRM DAZ family.

The protein localises to the cytoplasm. Its function is as follows. RNA-binding protein, which probably plays a central role in gametogenesis in both males and females. Acts by binding to the 3'-UTR of mRNA, specifically recognizing GUU triplets, and promoting the translation of key transcripts. This chain is Deleted in azoospermia-like (DAZL), found in Gallus gallus (Chicken).